We begin with the raw amino-acid sequence, 150 residues long: Probable NADH dehydrogenase [ubiquinone] 1 alpha subcomplex subunit 5 (150 aa).

The protein belongs to the complex I NDUFA5 subunit family. In terms of assembly, complex I is composed of 45 different subunits.

The protein localises to the mitochondrion inner membrane. In terms of biological role, accessory subunit of the mitochondrial membrane respiratory chain NADH dehydrogenase (Complex I), that is believed not to be involved in catalysis. Complex I functions in the transfer of electrons from NADH to the respiratory chain. The immediate electron acceptor for the enzyme is believed to be ubiquinone. In Caenorhabditis elegans, this protein is Probable NADH dehydrogenase [ubiquinone] 1 alpha subcomplex subunit 5.